A 119-amino-acid polypeptide reads, in one-letter code: MNRPVFPVYHFLVSAAILVFVVIFWRTHHRDHRNWLALRLFVLCSVNRWPLRMVKGTVVGTTDTLREMQRYEQLSSTGLTTGKSSREHRYMIRLLLSLVRVCAGIICQCMTIPYQPHRG.

2 consecutive transmembrane segments (helical) span residues 5-25 (VFPV…VIFW) and 94-114 (LLLS…TIPY).

Belongs to the phosphoethanolamine transferase family.

The protein localises to the cell inner membrane. In Escherichia coli (strain K12), this protein is Putative phosphoethanolamine transferase YjgX (yjgX).